The chain runs to 439 residues: Ribosomal protein uS12 methylthiotransferase RimO (439 aa).

An MTTase N-terminal domain is found at 7-122 (QTIAVIALGC…LPDLVFGKNF (116 aa)). C16, C52, C85, C155, C159, and C162 together coordinate [4Fe-4S] cluster. In terms of domain architecture, Radical SAM core spans 141–369 (SSTIPSAYLK…NAQYNIFQAK (229 aa)).

It belongs to the methylthiotransferase family. RimO subfamily. [4Fe-4S] cluster is required as a cofactor.

It localises to the cytoplasm. The catalysed reaction is L-aspartate(89)-[ribosomal protein uS12]-hydrogen + (sulfur carrier)-SH + AH2 + 2 S-adenosyl-L-methionine = 3-methylsulfanyl-L-aspartate(89)-[ribosomal protein uS12]-hydrogen + (sulfur carrier)-H + 5'-deoxyadenosine + L-methionine + A + S-adenosyl-L-homocysteine + 2 H(+). Its function is as follows. Catalyzes the methylthiolation of an aspartic acid residue of ribosomal protein uS12. The polypeptide is Ribosomal protein uS12 methylthiotransferase RimO (Endomicrobium trichonymphae).